We begin with the raw amino-acid sequence, 1241 residues long: Putative ABC transporter B family member 8 (1241 aa).

Residues 24 to 44 (FADWIDIVLMVLGSVGAIGDG) form a helical membrane-spanning segment. Residues 33–323 (MVLGSVGAIG…ALTEIRYFSE (291 aa)) form the ABC transmembrane type-1 1 domain. Asparagine 48 carries an N-linked (GlcNAc...) asparagine glycan. The next 5 membrane-spanning stretches (helical) occupy residues 82-102 (LYFV…GYCW), 157-177 (VPIF…SAYF), 183-203 (VVAI…GKYL), 263-283 (GLAV…AWYG), and 297-317 (IYAA…ALTE). Residues 360–596 (VEFERVTLVY…NNHYAKLVKL (237 aa)) enclose the ABC transporter 1 domain. Position 395–402 (395–402 (GASGSGKS)) interacts with ATP. N-linked (GlcNAc...) asparagine glycosylation is found at asparagine 571, asparagine 632, and asparagine 648. The ABC transmembrane type-1 2 domain occupies 676 to 964 (SLVGCISATT…AGSMTSDLAK (289 aa)). The next 2 membrane-spanning stretches (helical) occupy residues 686-706 (FGAI…AFFA) and 716-736 (IHIY…LNLL). Residue asparagine 773 is glycosylated (N-linked (GlcNAc...) asparagine). The next 2 helical transmembrane spans lie at 797-815 (ISLL…IIGL) and 821-838 (LALV…CFYT). Residue asparagine 855 is glycosylated (N-linked (GlcNAc...) asparagine). Transmembrane regions (helical) follow at residues 899 to 919 (AWLA…TWAL) and 933 to 953 (ISAG…KVIA). An ABC transporter 2 domain is found at 998–1236 (IELKNIDFSY…GGQFSRLAHA (239 aa)). 1033–1040 (GTSGCGKS) contacts ATP. A glycan (N-linked (GlcNAc...) asparagine) is linked at asparagine 1187.

The protein belongs to the ABC transporter superfamily. ABCB family. Multidrug resistance exporter (TC 3.A.1.201) subfamily.

It is found in the membrane. This chain is Putative ABC transporter B family member 8 (ABCB8), found in Arabidopsis thaliana (Mouse-ear cress).